We begin with the raw amino-acid sequence, 61 residues long: Large ribosomal subunit protein bL32 (61 aa).

Over residues 1–16 the composition is skewed to basic residues; that stretch reads MAVPKRKTSPSKRGMR. Residues 1–61 are disordered; sequence MAVPKRKTSP…RQVLTPKESA (61 aa). Positions 28–44 are enriched in basic and acidic residues; sequence VEDKNSGELRRPHHIDL.

This sequence belongs to the bacterial ribosomal protein bL32 family.

The polypeptide is Large ribosomal subunit protein bL32 (Rhizobium etli (strain CIAT 652)).